A 260-amino-acid polypeptide reads, in one-letter code: Endomucin (260 aa).

An N-terminal signal peptide occupies residues 1–18 (MELLQVTILFLLPSICSS). 4 N-linked (GlcNAc...) asparagine glycosylation sites follow: Asn-19, Asn-28, Asn-97, and Asn-103. Topologically, residues 19 to 189 (NSTGVLEAAN…TSATSRSYSS (171 aa)) are extracellular. Composition is skewed to polar residues over residues 119 to 133 (QSSKPKTETQSSIKT) and 145 to 170 (ASPSETGTLSSIPVTIPENTSQSQVI). Residues 119–182 (QSSKPKTETQ…EGGKNASTSA (64 aa)) form a disordered region. Residues Asn-163 and Asn-177 are each glycosylated (N-linked (GlcNAc...) asparagine). A helical membrane pass occupies residues 190–210 (IILPVVIALIVITLSVFVLVG). The Cytoplasmic portion of the chain corresponds to 211-260 (LYRMCWKADPGTPENGNDQPQSDKESVKLLTVKTISHESGEHSAQGKTKN). Ser-236 carries the phosphoserine modification.

Highly O-glycosylated. Sialic acid-rich glycoprotein.

Its subcellular location is the membrane. Functionally, endothelial sialomucin, also called endomucin or mucin-like sialoglycoprotein, which interferes with the assembly of focal adhesion complexes and inhibits interaction between cells and the extracellular matrix. The chain is Endomucin (EMCN) from Pongo abelii (Sumatran orangutan).